Here is a 1035-residue protein sequence, read N- to C-terminus: FERM domain-containing protein 4B (1035 aa).

In terms of domain architecture, FERM spans 59-361; that stretch reads RHCQVHLLDD…SQHQFYLDRK (303 aa). A Phosphoserine modification is found at Ser-372. 2 coiled-coil regions span residues 414–451 and 535–559; these read QDSEGMEEQKREKILELKKKEKLLQEKLLQKVEELKKI and KQDYTDAVKRLQEIENSINEYRIRC. The necessary for adherens junction and tight junction localization stretch occupies residues 542–972; that stretch reads VKRLQEIENS…TQLTIGLSEY (431 aa). 4 disordered regions span residues 563–615, 631–699, 713–738, and 754–798; these read PSQK…ILPP, NEQF…LESQ, FTLSKSQRSSSTEILDDGSSYTSQSS, and TQTL…SKGQ. Residues 571-590 are compositionally biased toward low complexity; that stretch reads PPEDIIPSESSSLSDTTTYD. Positions 594-607 are enriched in polar residues; the sequence is DSFTLAGQRPSSVP. Residue Ser-609 is modified to Phosphoserine. Positions 635 to 644 are enriched in basic and acidic residues; that stretch reads MDTRHSREML. 2 stretches are compositionally biased toward polar residues: residues 664–699 and 715–725; these read MPTTPVLTRNAYSSSHLEPDSSSQHCRQRSGSLESQ and LSKSQRSSSTE. At Ser-698 the chain carries Phosphoserine. A compositionally biased stretch (basic residues) spans 762 to 771; it reads RGRRRSKKHS. The span at 772–782 shows a compositional bias: polar residues; that stretch reads VSTSNSGSMPN. A Glycyl lysine isopeptide (Lys-Gly) (interchain with G-Cter in SUMO2) cross-link involves residue Lys-883. 3 disordered regions span residues 906-926, 939-958, and 994-1035; these read RASGQKDQGHSPQTSFDSDRG, PCSPSSRASSYSSVSSTNAS, and PSRQ…GTLV. A compositionally biased stretch (polar residues) spans 907-921; it reads ASGQKDQGHSPQTSF. A Phosphoserine modification is found at Ser-916. Over residues 941 to 958 the composition is skewed to low complexity; that stretch reads SPSSRASSYSSVSSTNAS. Residues 1019–1035 show a composition bias toward basic and acidic residues; the sequence is SEQRLFWHEDSKPGTLV. A Glycyl lysine isopeptide (Lys-Gly) (interchain with G-Cter in SUMO2) cross-link involves residue Lys-1030.

Interacts with CYTH3. Interacts with PARD3. Interacts with CYTH1. Isoform 1 is expressed in the brain. Isoform 2 is expressed in the lung (at protein level).

Its subcellular location is the cytoplasm. The protein resides in the cytoskeleton. It is found in the cell junction. It localises to the tight junction. The protein localises to the adherens junction. In terms of biological role, member of GRP1 signaling complexes that are acutely recruited to plasma membrane ruffles in response to insulin receptor signaling. May function as a scaffolding protein that regulates epithelial cell polarity by connecting ARF6 activation with the PAR3 complex. Plays a redundant role with FRMD4A in epithelial polarization. This chain is FERM domain-containing protein 4B (Frmd4b), found in Mus musculus (Mouse).